The chain runs to 160 residues: 6,7-dimethyl-8-ribityllumazine synthase (160 aa).

5-amino-6-(D-ribitylamino)uracil contacts are provided by residues Phe32, Ala66–Glu68, and Cys90–Ile92. Glu95 to Thr96 serves as a coordination point for (2S)-2-hydroxy-3-oxobutyl phosphate. His98 acts as the Proton donor in catalysis. Asn123 contributes to the 5-amino-6-(D-ribitylamino)uracil binding site. Arg137 is a binding site for (2S)-2-hydroxy-3-oxobutyl phosphate.

Belongs to the DMRL synthase family.

It catalyses the reaction (2S)-2-hydroxy-3-oxobutyl phosphate + 5-amino-6-(D-ribitylamino)uracil = 6,7-dimethyl-8-(1-D-ribityl)lumazine + phosphate + 2 H2O + H(+). The protein operates within cofactor biosynthesis; riboflavin biosynthesis; riboflavin from 2-hydroxy-3-oxobutyl phosphate and 5-amino-6-(D-ribitylamino)uracil: step 1/2. In terms of biological role, catalyzes the formation of 6,7-dimethyl-8-ribityllumazine by condensation of 5-amino-6-(D-ribitylamino)uracil with 3,4-dihydroxy-2-butanone 4-phosphate. This is the penultimate step in the biosynthesis of riboflavin. The sequence is that of 6,7-dimethyl-8-ribityllumazine synthase from Methylibium petroleiphilum (strain ATCC BAA-1232 / LMG 22953 / PM1).